A 262-amino-acid polypeptide reads, in one-letter code: Thiazole synthase (262 aa).

Residue K96 is the Schiff-base intermediate with DXP of the active site. 1-deoxy-D-xylulose 5-phosphate is bound by residues G157, 184-185 (AG), and 206-207 (NT).

The protein belongs to the ThiG family. In terms of assembly, homotetramer. Forms heterodimers with either ThiH or ThiS.

It is found in the cytoplasm. It catalyses the reaction [ThiS sulfur-carrier protein]-C-terminal-Gly-aminoethanethioate + 2-iminoacetate + 1-deoxy-D-xylulose 5-phosphate = [ThiS sulfur-carrier protein]-C-terminal Gly-Gly + 2-[(2R,5Z)-2-carboxy-4-methylthiazol-5(2H)-ylidene]ethyl phosphate + 2 H2O + H(+). It functions in the pathway cofactor biosynthesis; thiamine diphosphate biosynthesis. Functionally, catalyzes the rearrangement of 1-deoxy-D-xylulose 5-phosphate (DXP) to produce the thiazole phosphate moiety of thiamine. Sulfur is provided by the thiocarboxylate moiety of the carrier protein ThiS. In vitro, sulfur can be provided by H(2)S. The protein is Thiazole synthase of Legionella pneumophila (strain Paris).